The primary structure comprises 475 residues: Exodeoxyribonuclease 7 large subunit (475 aa).

It belongs to the XseA family. In terms of assembly, heterooligomer composed of large and small subunits.

It localises to the cytoplasm. The enzyme catalyses Exonucleolytic cleavage in either 5'- to 3'- or 3'- to 5'-direction to yield nucleoside 5'-phosphates.. Bidirectionally degrades single-stranded DNA into large acid-insoluble oligonucleotides, which are then degraded further into small acid-soluble oligonucleotides. This chain is Exodeoxyribonuclease 7 large subunit, found in Bartonella henselae (strain ATCC 49882 / DSM 28221 / CCUG 30454 / Houston 1) (Rochalimaea henselae).